The sequence spans 538 residues: Adenine deaminase (538 aa).

Belongs to the metallo-dependent hydrolases superfamily. Adenine deaminase family. It depends on Mn(2+) as a cofactor.

The enzyme catalyses adenine + H2O + H(+) = hypoxanthine + NH4(+). In Methanothermobacter thermautotrophicus (strain ATCC 29096 / DSM 1053 / JCM 10044 / NBRC 100330 / Delta H) (Methanobacterium thermoautotrophicum), this protein is Adenine deaminase.